Consider the following 497-residue polypeptide: Ganglioside-induced differentiation-associated protein 2 (497 aa).

The region spanning 43–223 (RSPFLYNKDV…TYQKLLPLYF (181 aa)) is the Macro domain. The interval 252–273 (ERQIRISEKPGAPEDNQEEEDE) is disordered. Residues 253–263 (RQIRISEKPGA) show a composition bias toward basic and acidic residues. Residue Ser-280 is modified to Phosphoserine. In terms of domain architecture, CRAL-TRIO spans 333-481 (DIASLKALYQ…FPPFVLEYDA (149 aa)).

This sequence belongs to the GDAP2 family.

This chain is Ganglioside-induced differentiation-associated protein 2 (GDAP2), found in Homo sapiens (Human).